Here is a 470-residue protein sequence, read N- to C-terminus: Sorting nexin-17 (470 aa).

The PX domain occupies 1-109 (MHFSIPETES…SFLRRAQQET (109 aa)). The a 1,2-diacyl-sn-glycero-3-phospho-(1D-myo-inositol-3-phosphate) site is built by Arg-36, Ser-38, Lys-62, and Arg-75. A Ras-associating domain is found at 115–206 (EEVSLEVLLS…YKIVLRKSYW (92 aa)). An FERM-like region spans residues 115-432 (EEVSLEVLLS…DASRESMVKL (318 aa)). The PTB-like F3 module stretch occupies residues 270–432 (GYLRFDACVA…DASRESMVKL (163 aa)). A phosphoserine mark is found at Ser-336, Ser-407, Ser-409, Ser-415, Ser-421, Ser-437, and Ser-440. The disordered stretch occupies residues 400 to 426 (VGGTLRRSDSQQAVKSPPLLESPDASR).

Belongs to the sorting nexin family. Monomer. Interacts with APP (via cytoplasmic YXNPXY motif). Interacts with KIF1B. Interacts with the C-termini of P-selectin, PTC, LDLR, VLDLR, LRP1 and LRP8. Interacts with KRIT1 (via N-terminus). Interacts with HRAS. Interacts with ITGB1 and ITGB5 (via NPxY motif). Interacts with CCDC22 and CCDC93; the interaction associates SNX17 with the CCC complex. Interacts (via C-terminus) with VPS26C and VPS35L; the interactions are direct and associate SNX17 with the retriever complex.

It localises to the cytoplasm. It is found in the early endosome. The protein resides in the cytoplasmic vesicle membrane. In terms of biological role, critical regulator of endosomal recycling of numerous surface proteins, including integrins, signaling receptor and channels. Binds to NPxY sequences in the cytoplasmic tails of target cargos. Associates with retriever and CCC complexes to prevent lysosomal degradation and promote cell surface recycling of numerous cargos such as integrins ITGB1, ITGB5 and their associated alpha subunits. Also required for maintenance of normal cell surface levels of APP and LRP1. Interacts with membranes containing phosphatidylinositol 3-phosphate (PtdIns(3P)). This is Sorting nexin-17 (SNX17) from Bos taurus (Bovine).